The sequence spans 437 residues: Transcription factor AP-2-alpha (437 aa).

A Glycyl lysine isopeptide (Lys-Gly) (interchain with G-Cter in SUMO); alternate cross-link involves residue lysine 10. Lysine 10 participates in a covalent cross-link: Glycyl lysine isopeptide (Lys-Gly) (interchain with G-Cter in SUMO2); alternate. The tract at residues 14–107 is disordered; sequence CEDRHDGTSN…GQRQSQESGL (94 aa). Residues 57–62 carry the PPxY motif motif; sequence YFPPPY. 2 stretches are compositionally biased toward low complexity: residues 65–74 and 88–101; these read IYPQSQDPYS and QPQPQHPGWPGQRQ. Residues lysine 177 and lysine 184 each participate in a glycyl lysine isopeptide (Lys-Gly) (interchain with G-Cter in SUMO2) cross-link. Serine 239 is subject to Phosphoserine; by PKA. The interval 280 to 410 is H-S-H (helix-span-helix), dimerization; the sequence is RRKAANVTLL…YLTEALKAMD (131 aa). Residues 414–427 are compositionally biased toward polar residues; the sequence is LSNNPNSHTDNNAK. Positions 414-437 are disordered; it reads LSNNPNSHTDNNAKSSDKEEKHRK. Positions 428–437 are enriched in basic and acidic residues; sequence SSDKEEKHRK.

Belongs to the AP-2 family. In terms of assembly, binds DNA as a dimer. Can form homodimers or heterodimers with other AP-2 family members. Interacts with WWOX. Interacts with CITED4. Interacts with UBE2I. Interacts with RALBP1 in a complex also containing EPN1 and NUMB during interphase and mitosis. Interacts with KCTD1; this interaction represses transcription activation. Interacts (via C-terminus) with CITED2 (via C-terminus); the interaction stimulates TFAP2A-transcriptional activation. Interacts (via N-terminus) with EP300 (via N-terminus); the interaction requires CITED2. Interacts with KCTD15; this interaction inhibits TFAP2A transcriptional activation. Post-translationally, sumoylated on Lys-10; which inhibits transcriptional activity.

It is found in the nucleus. Sequence-specific DNA-binding protein that interacts with inducible viral and cellular enhancer elements to regulate transcription of selected genes. AP-2 factors bind to the consensus sequence 5'-GCCNNNGGC-3' and activate genes involved in a large spectrum of important biological functions including proper eye, face, body wall, limb and neural tube development. They also suppress a number of genes including MCAM/MUC18, C/EBP alpha and MYC. AP-2-alpha is the only AP-2 protein required for early morphogenesis of the lens vesicle. Together with the CITED2 coactivator, stimulates the PITX2 P1 promoter transcription activation. Associates with chromatin to the PITX2 P1 promoter region. The polypeptide is Transcription factor AP-2-alpha (TFAP2A) (Homo sapiens (Human)).